A 344-amino-acid chain; its full sequence is Holliday junction branch migration complex subunit RuvB (344 aa).

The large ATPase domain (RuvB-L) stretch occupies residues 1–183 (MLDERLISSH…FGISCRLDFY (183 aa)). ATP-binding positions include Ile22, Arg23, Gly64, Lys67, Thr68, Thr69, 130 to 132 (EDY), Arg173, Tyr183, and Arg220. Residue Thr68 participates in Mg(2+) binding. Residues 184–254 (TPLELSEIIL…LAKWALEMLE (71 aa)) are small ATPAse domain (RuvB-S). The interval 257-344 (ECGLDVMDRM…LEGKGLFSDA (88 aa)) is head domain (RuvB-H). DNA-binding residues include Lys312 and Arg317.

This sequence belongs to the RuvB family. As to quaternary structure, homohexamer. Forms an RuvA(8)-RuvB(12)-Holliday junction (HJ) complex. HJ DNA is sandwiched between 2 RuvA tetramers; dsDNA enters through RuvA and exits via RuvB. An RuvB hexamer assembles on each DNA strand where it exits the tetramer. Each RuvB hexamer is contacted by two RuvA subunits (via domain III) on 2 adjacent RuvB subunits; this complex drives branch migration. In the full resolvosome a probable DNA-RuvA(4)-RuvB(12)-RuvC(2) complex forms which resolves the HJ.

The protein localises to the cytoplasm. It carries out the reaction ATP + H2O = ADP + phosphate + H(+). Its function is as follows. The RuvA-RuvB-RuvC complex processes Holliday junction (HJ) DNA during genetic recombination and DNA repair, while the RuvA-RuvB complex plays an important role in the rescue of blocked DNA replication forks via replication fork reversal (RFR). RuvA specifically binds to HJ cruciform DNA, conferring on it an open structure. The RuvB hexamer acts as an ATP-dependent pump, pulling dsDNA into and through the RuvAB complex. RuvB forms 2 homohexamers on either side of HJ DNA bound by 1 or 2 RuvA tetramers; 4 subunits per hexamer contact DNA at a time. Coordinated motions by a converter formed by DNA-disengaged RuvB subunits stimulates ATP hydrolysis and nucleotide exchange. Immobilization of the converter enables RuvB to convert the ATP-contained energy into a lever motion, pulling 2 nucleotides of DNA out of the RuvA tetramer per ATP hydrolyzed, thus driving DNA branch migration. The RuvB motors rotate together with the DNA substrate, which together with the progressing nucleotide cycle form the mechanistic basis for DNA recombination by continuous HJ branch migration. Branch migration allows RuvC to scan DNA until it finds its consensus sequence, where it cleaves and resolves cruciform DNA. This chain is Holliday junction branch migration complex subunit RuvB, found in Syntrophomonas wolfei subsp. wolfei (strain DSM 2245B / Goettingen).